The chain runs to 230 residues: UPF0173 metal-dependent hydrolase LI0883 (230 aa).

Belongs to the UPF0173 family.

The polypeptide is UPF0173 metal-dependent hydrolase LI0883 (Lawsonia intracellularis (strain PHE/MN1-00)).